The sequence spans 222 residues: ATP synthase F(0) complex subunit a (222 aa).

The next 6 membrane-spanning stretches (helical) occupy residues 7–27, 64–84, 93–113, 132–152, 160–180, and 185–205; these read AFFDVPVGTMMLAIAFPAILL, WSLMLITLTLFIGLTNLLGLL, QLTVNLSMAIPLWTGTVILGF, FLIPMIIIIETISLLIRPVTL, ITAGHLLIHLTGTAALTLLSI, and ITVTFITVVVLTILELAVALI.

It belongs to the ATPase A chain family. Component of the ATP synthase complex composed at least of ATP5F1A/subunit alpha, ATP5F1B/subunit beta, ATP5MC1/subunit c (homooctomer), MT-ATP6/subunit a, MT-ATP8/subunit 8, ATP5ME/subunit e, ATP5MF/subunit f, ATP5MG/subunit g, ATP5MK/subunit k, ATP5MJ/subunit j, ATP5F1C/subunit gamma, ATP5F1D/subunit delta, ATP5F1E/subunit epsilon, ATP5PF/subunit F6, ATP5PB/subunit b, ATP5PD/subunit d, ATP5PO/subunit OSCP. ATP synthase complex consists of a soluble F(1) head domain (subunits alpha(3) and beta(3)) - the catalytic core - and a membrane F(0) domain - the membrane proton channel (subunits c, a, 8, e, f, g, k and j). These two domains are linked by a central stalk (subunits gamma, delta, and epsilon) rotating inside the F1 region and a stationary peripheral stalk (subunits F6, b, d, and OSCP). Interacts with DNAJC30; interaction is direct.

The protein localises to the mitochondrion inner membrane. It carries out the reaction H(+)(in) = H(+)(out). Its function is as follows. Subunit a, of the mitochondrial membrane ATP synthase complex (F(1)F(0) ATP synthase or Complex V) that produces ATP from ADP in the presence of a proton gradient across the membrane which is generated by electron transport complexes of the respiratory chain. ATP synthase complex consist of a soluble F(1) head domain - the catalytic core - and a membrane F(1) domain - the membrane proton channel. These two domains are linked by a central stalk rotating inside the F(1) region and a stationary peripheral stalk. During catalysis, ATP synthesis in the catalytic domain of F(1) is coupled via a rotary mechanism of the central stalk subunits to proton translocation. With the subunit c (ATP5MC1), forms the proton-conducting channel in the F(0) domain, that contains two crucial half-channels (inlet and outlet) that facilitate proton movement from the mitochondrial intermembrane space (IMS) into the matrix. Protons are taken up via the inlet half-channel and released through the outlet half-channel, following a Grotthuss mechanism. The chain is ATP synthase F(0) complex subunit a from Mammuthus primigenius (Siberian woolly mammoth).